Consider the following 58-residue polypeptide: Small ribosomal subunit protein bS21 (58 aa).

Residues 36 to 58 (RHHETPVEKYKRKLQQRRRSRRR) form a disordered region. The span at 45-58 (YKRKLQQRRRSRRR) shows a compositional bias: basic residues.

The protein belongs to the bacterial ribosomal protein bS21 family.

This chain is Small ribosomal subunit protein bS21, found in Prochlorococcus marinus (strain NATL1A).